Reading from the N-terminus, the 457-residue chain is Autophagy-related protein 14 (457 aa).

Residues 31-109 (RIENVMALIE…TRRAALSRRK (79 aa)) adopt a coiled-coil conformation. Disordered stretches follow at residues 54-73 (ETNA…QRTA), 252-274 (PSQA…VSRP), and 433-457 (NKNL…VKNR). Positions 253–266 (SQASVSSPSSTTDT) are enriched in low complexity.

Belongs to the ATG14 family. Component of the autophagy-specific VPS34 PI3-kinase complex I.

It is found in the preautophagosomal structure membrane. The protein localises to the vacuole membrane. Required for cytoplasm to vacuole transport (Cvt) and autophagy as a part of the autophagy-specific VPS34 PI3-kinase complex I. This complex is essential to recruit the ATG8-phosphatidylinositol conjugate and the ATG12-ATG5 conjugate to the pre-autophagosomal structure. ATG14 mediates the specific binding of the VPS34 PI3-kinase complex I to the preautophagosomal structure (PAS). Autophagy is required for proper vegetative growth, asexual/sexual reproduction, and full virulence. Autophagy is particularly involved in the biosynthesis of deoxynivalenol (DON), an important virulence determinant. This is Autophagy-related protein 14 from Gibberella zeae (strain ATCC MYA-4620 / CBS 123657 / FGSC 9075 / NRRL 31084 / PH-1) (Wheat head blight fungus).